A 141-amino-acid polypeptide reads, in one-letter code: Large ribosomal subunit protein uL11 (141 aa).

The protein belongs to the universal ribosomal protein uL11 family. In terms of assembly, part of the ribosomal stalk of the 50S ribosomal subunit. Interacts with L10 and the large rRNA to form the base of the stalk. L10 forms an elongated spine to which L12 dimers bind in a sequential fashion forming a multimeric L10(L12)X complex. One or more lysine residues are methylated.

In terms of biological role, forms part of the ribosomal stalk which helps the ribosome interact with GTP-bound translation factors. This is Large ribosomal subunit protein uL11 from Chlorobium phaeovibrioides (strain DSM 265 / 1930) (Prosthecochloris vibrioformis (strain DSM 265)).